Consider the following 923-residue polypeptide: Carnitine O-acetyltransferase YAT2 (923 aa).

The segment covering 1 to 11 (MSSGSTIVSSD) has biased composition (polar residues). 2 disordered regions span residues 1–21 (MSSG…KHEE) and 197–232 (NKPY…KRKH). Residue Ser2 is modified to N-acetylserine. A compositionally biased stretch (basic and acidic residues) spans 12–21 (KSGRTFKHEE). Over residues 204 to 219 (DLEDPDYSSDEDDNDE) the composition is skewed to acidic residues. Over residues 220-232 (PTQKDFDDRKRKH) the composition is skewed to basic and acidic residues. CoA is bound by residues 529 to 541 (GRRS…VKPD) and Ser567. Ser576 is a (R)-carnitine binding site. A disordered region spans residues 763 to 787 (NAVNNPPKRNGHTVNGSRKTSSSSQ). The segment covering 774 to 787 (HTVNGSRKTSSSSQ) has biased composition (polar residues). Ser783 is subject to Phosphoserine.

The protein belongs to the carnitine/choline acetyltransferase family.

The protein localises to the cytoplasm. The enzyme catalyses (R)-carnitine + acetyl-CoA = O-acetyl-(R)-carnitine + CoA. In terms of biological role, carnitine O-acetyltransferase involved in the shutteling of acetyl-CoA in the cell. This chain is Carnitine O-acetyltransferase YAT2, found in Saccharomyces cerevisiae (strain ATCC 204508 / S288c) (Baker's yeast).